The chain runs to 512 residues: MTELRDETPLFHKGEIVLCYEPDKSKARVLYTSKVLNVFERRNEHGLRFYEYKIHFQGWRPSYDRCVRATVLLKDTEENRQLQRELAEAAKLQIRGDYSYKGTPDKPSAKKKRGGKAAHVEEPIVVPMDTGHLEAEHEMAPTPRAAGNRTRDNSGGKRKEKPPSGDGRLKGNRGRQTETFYNNAINDVSVYNHVPQEDRIMMRVSERLRELIEYDRNMIKVLGKQHALPARVPIVTIMENFVKQQAVELAISIKQDSSRARNTQSRNARMEREYDRVMSTVCMLKEVVDGLRIYFEFHVDDHLLYTEEKEYVHNYLTDDNMRNCSLILNKSYEYINPSGDTELIGLDGTPVVEGSGDTNGQIGVINIGGPEYEKQLQKCLLYIVTASGKNTAQAYERTSPYTAAYKLPVEMRGFLNETFKWRLLSAESPPEKSMVFGAPHLVRLMIKMPMFLNASPISNKKLEDLLPHLDAFINYLENHREWFDRENFVNSTALPQEDLQRELLDSLDGIAA.

The region spanning 11 to 90 (FHKGEIVLCY…QLQRELAEAA (80 aa)) is the Chromo domain. A disordered region spans residues 98-175 (YSYKGTPDKP…DGRLKGNRGR (78 aa)). A compositionally biased stretch (basic and acidic residues) spans 149 to 169 (RTRDNSGGKRKEKPPSGDGRL). The 305-residue stretch at 196-500 (QEDRIMMRVS…STALPQEDLQ (305 aa)) folds into the MRG domain.

Component of the male-specific lethal (MSL) histone acetyltransferase complex, composed of mof, mle, msl-1, msl-2 and msl-3 proteins, as well as roX1 and roX2 non-coding RNAs. Component of a maternal MSL subcomplex composed of mof, msl-1 and msl-3. Post-translationally, ubiquitinated by msl-2.

The protein localises to the nucleus. Its subcellular location is the chromosome. Functionally, component of the male-specific lethal (MSL) histone acetyltransferase complex, a multiprotein complex essential for elevating transcription of the single X chromosome in the male (X chromosome dosage compensation). The MSL complex specifically associates with the single X chromosome in males and mediates formation of H4K16ac, promoting a two-fold activation of X chromosome. Acts as a histone reader that specifically recognizes and binds histone H3 trimethylated at 'Lys-36' (H3K36me3) and histone H4 monomethylated at 'Lys-20' (H4K20me1). Within the MSL complex, mediates the spreading of the MSL complex from initiation sites on the male X chromosome to flanking chromatin. Following initial recruitment of the MSL complex to male X chromosome by msl-2, msl-3 binds H3K36me3 and promotes spreading of the MSL complex in cis. In addition to its role in dosage compensation in males, promotes germline stem cell differentiation in females: recognizes and binds H3K36me3, promoting recruitment of the ATAC complex and transcription of genes, such as RpS19b. In Drosophila melanogaster (Fruit fly), this protein is Protein male-specific lethal-3.